The following is a 333-amino-acid chain: Adenosine deaminase (333 aa).

His12 and His14 together coordinate Zn(2+). Substrate is bound by residues His14, Asp16, and Gly170. Zn(2+) is bound at residue His197. Glu200 acts as the Proton donor in catalysis. Asp278 lines the Zn(2+) pocket. Asp279 contacts substrate.

Belongs to the metallo-dependent hydrolases superfamily. Adenosine and AMP deaminases family. Adenosine deaminase subfamily. The cofactor is Zn(2+).

It catalyses the reaction adenosine + H2O + H(+) = inosine + NH4(+). The enzyme catalyses 2'-deoxyadenosine + H2O + H(+) = 2'-deoxyinosine + NH4(+). Catalyzes the hydrolytic deamination of adenosine and 2-deoxyadenosine. The protein is Adenosine deaminase of Salmonella dublin (strain CT_02021853).